The primary structure comprises 200 residues: MEKFTTLEGVAAPLRTINVDTDRIIPAKYLKTIRRTGLGKSLFAEMRYREDGSENPDFILNQPAYRNSKILVCGDNFGCGSSREHAPWALADFGIRCVISTSFADIFFNNCAKNGILAIVVSPEDLEKLFEDAERGANATLTVDLAAQTIRGPDGGTLHFDVDEGRKHNLLNGLDEIGLTLERVSSIDAYEQKLAQRTWA.

This sequence belongs to the LeuD family. LeuD type 1 subfamily. Heterodimer of LeuC and LeuD.

It carries out the reaction (2R,3S)-3-isopropylmalate = (2S)-2-isopropylmalate. It functions in the pathway amino-acid biosynthesis; L-leucine biosynthesis; L-leucine from 3-methyl-2-oxobutanoate: step 2/4. Catalyzes the isomerization between 2-isopropylmalate and 3-isopropylmalate, via the formation of 2-isopropylmaleate. In Methylobacterium radiotolerans (strain ATCC 27329 / DSM 1819 / JCM 2831 / NBRC 15690 / NCIMB 10815 / 0-1), this protein is 3-isopropylmalate dehydratase small subunit.